The primary structure comprises 248 residues: Deoxyribose-phosphate aldolase (248 aa).

Catalysis depends on D117, which acts as the Proton donor/acceptor. K179 (schiff-base intermediate with acetaldehyde) is an active-site residue. K208 (proton donor/acceptor) is an active-site residue.

Belongs to the DeoC/FbaB aldolase family. DeoC type 1 subfamily.

It is found in the cytoplasm. It carries out the reaction 2-deoxy-D-ribose 5-phosphate = D-glyceraldehyde 3-phosphate + acetaldehyde. It functions in the pathway carbohydrate degradation; 2-deoxy-D-ribose 1-phosphate degradation; D-glyceraldehyde 3-phosphate and acetaldehyde from 2-deoxy-alpha-D-ribose 1-phosphate: step 2/2. Catalyzes a reversible aldol reaction between acetaldehyde and D-glyceraldehyde 3-phosphate to generate 2-deoxy-D-ribose 5-phosphate. This chain is Deoxyribose-phosphate aldolase, found in Thermotoga maritima (strain ATCC 43589 / DSM 3109 / JCM 10099 / NBRC 100826 / MSB8).